A 700-amino-acid chain; its full sequence is Putative glutamine-dependent NAD(+) synthetase (700 aa).

The region spanning 5-275 (VTIASCQLNQ…VEVISATVDV (271 aa)) is the CN hydrolase domain. Glu45 serves as the catalytic Proton acceptor; for glutaminase activity. Lys114 (for glutaminase activity) is an active-site residue. Catalysis depends on Cys175, which acts as the Nucleophile; for glutaminase activity. The tract at residues 327–700 (IPLPEEEITF…ASKFEQHQRK (374 aa)) is ligase. 357–364 (PLSGGLDS) serves as a coordination point for ATP. Residue Ser359 is part of the active site.

The protein in the C-terminal section; belongs to the NAD synthetase family.

The enzyme catalyses deamido-NAD(+) + L-glutamine + ATP + H2O = L-glutamate + AMP + diphosphate + NAD(+) + H(+). It participates in cofactor biosynthesis; NAD(+) biosynthesis; NAD(+) from deamido-NAD(+) (L-Gln route): step 1/1. This chain is Putative glutamine-dependent NAD(+) synthetase, found in Schizosaccharomyces pombe (strain 972 / ATCC 24843) (Fission yeast).